The sequence spans 352 residues: MSASTTATTRHDWALAEVKALFQQPFNDLLFQAQTVHRAHFDPNRVQVSTLLSIKTGACPEDCKYCPQSGHYNTGLEKQKLMEVQKVLEEAARAKAIGSTRFCMGAAWKHPSAKDMPYVLEMVKGVKAMGLETCMTLGKLDQEQTKALAQAGLDYYNHNLDTSPEFYGSIITTRTYSERLQTLAYVRDAGMKICSGGILGMGESLDDRAGLLIQLANLPEHPESVPINMLVKVAGTPLAEEEDVDPFDFIRMLAVARILMPKSHVRLSAGREQMNEQMQALAFMAGANSIFYGEKLLTTANPQADKDMQLFARLGIKPEAREEHADEVHQAAIEQALVEQRSSEMFYDAATA.

Positions 44-262 (NRVQVSTLLS…LAVARILMPK (219 aa)) constitute a Radical SAM core domain. Residues Cys-59, Cys-63, and Cys-66 each coordinate [4Fe-4S] cluster. Cys-103, Cys-134, Cys-194, and Arg-266 together coordinate [2Fe-2S] cluster.

This sequence belongs to the radical SAM superfamily. Biotin synthase family. In terms of assembly, homodimer. [4Fe-4S] cluster is required as a cofactor. The cofactor is [2Fe-2S] cluster.

It catalyses the reaction (4R,5S)-dethiobiotin + (sulfur carrier)-SH + 2 reduced [2Fe-2S]-[ferredoxin] + 2 S-adenosyl-L-methionine = (sulfur carrier)-H + biotin + 2 5'-deoxyadenosine + 2 L-methionine + 2 oxidized [2Fe-2S]-[ferredoxin]. The protein operates within cofactor biosynthesis; biotin biosynthesis; biotin from 7,8-diaminononanoate: step 2/2. In terms of biological role, catalyzes the conversion of dethiobiotin (DTB) to biotin by the insertion of a sulfur atom into dethiobiotin via a radical-based mechanism. This chain is Biotin synthase, found in Pseudomonas putida (strain ATCC 47054 / DSM 6125 / CFBP 8728 / NCIMB 11950 / KT2440).